Here is a 273-residue protein sequence, read N- to C-terminus: Medium-wave-sensitive opsin 1 (273 aa).

Over 1 to 5 (APRWV) the chain is Extracellular. The chain crosses the membrane as a helical span at residues 6–30 (YHLTSAWMVFVVIASVFTNGLVLAA). Residues 31–42 (TMRFKKLRHPLN) lie on the Cytoplasmic side of the membrane. Residues 43–68 (WILVNLAIADLVETIIASTISVVNQM) form a helical membrane-spanning segment. Over 69–82 (YGYFVLGHPLCVVE) the chain is Extracellular. A disulfide bond links C79 and C156. A helical membrane pass occupies residues 83 to 102 (GYTASLCGITGLWSLAIISW). Topologically, residues 103–121 (ERWMVVCRPFGNVRFDAKL) are cytoplasmic. Residues 122–145 (AIAGIAFSWIWAAVWTAPPIFGWS) traverse the membrane as a helical segment. The Extracellular segment spans residues 146-171 (RYWPHGLKTSCGPDVFSGSSYPGVQS). The helical transmembrane segment at 172–199 (YMIVLMITCCFIPLSVIVLCYLQVWLAI) threads the bilayer. At 200–221 (RAVAKQQKESESTQKAEKEVTR) the chain is on the cytoplasmic side. Residues 222–245 (MVMVMIFAFCLCWGPYAFFACFAA) form a helical membrane-spanning segment. The Extracellular segment spans residues 246–253 (AHPGYAFH). A helical transmembrane segment spans residues 254-273 (PLVAALPAYFAKSATIYNPI). K265 carries the N6-(retinylidene)lysine modification.

It belongs to the G-protein coupled receptor 1 family. Opsin subfamily. As to quaternary structure, monomer. Homodimer. Homotetramer. Post-translationally, O-glycosylated. In terms of processing, phosphorylated on some or all of the serine and threonine residues present in the C-terminal region. In terms of tissue distribution, the three color pigments are found in the cone photoreceptor cells.

The protein resides in the membrane. In terms of biological role, visual pigments are the light-absorbing molecules that mediate vision. They consist of an apoprotein, opsin, covalently linked to cis-retinal. The chain is Medium-wave-sensitive opsin 1 (OPN1MW) from Odocoileus virginianus virginianus (Virginia white-tailed deer).